Here is a 932-residue protein sequence, read N- to C-terminus: Protein translocase subunit SecA (932 aa).

ATP-binding positions include Gln-87, 105–109, and Asp-515; that span reads GEGKT. Residues Cys-916, Cys-918, Cys-927, and His-928 each coordinate Zn(2+).

Belongs to the SecA family. In terms of assembly, monomer and homodimer. Part of the essential Sec protein translocation apparatus which comprises SecA, SecYEG and auxiliary proteins SecDF-YajC and YidC. Zn(2+) is required as a cofactor.

The protein localises to the cell inner membrane. The protein resides in the cytoplasm. The enzyme catalyses ATP + H2O + cellular proteinSide 1 = ADP + phosphate + cellular proteinSide 2.. Part of the Sec protein translocase complex. Interacts with the SecYEG preprotein conducting channel. Has a central role in coupling the hydrolysis of ATP to the transfer of proteins into and across the cell membrane, serving both as a receptor for the preprotein-SecB complex and as an ATP-driven molecular motor driving the stepwise translocation of polypeptide chains across the membrane. The sequence is that of Protein translocase subunit SecA from Burkholderia orbicola (strain MC0-3).